A 137-amino-acid chain; its full sequence is NADH dehydrogenase [ubiquinone] 1 beta subcomplex subunit 7 (137 aa).

Gly-2 carries N-myristoyl glycine lipidation. The CHCH domain maps to 56–98 (RDYCAHHLIRLLKCKRDSFPNFLACKQERHDWDYCEHRDYVMR). The Cx9C motif 1 signature appears at 59 to 69 (CAHHLIRLLKC). Disulfide bonds link Cys-59–Cys-90 and Cys-69–Cys-80. Phosphoserine is present on Ser-73. Residues 80–90 (CKQERHDWDYC) carry the Cx9C motif 2 motif. Residues 113–137 (KRREKKAAELAKGQGPGEVDPKVAL) are disordered.

Belongs to the complex I NDUFB7 subunit family. As to quaternary structure, complex I is composed of 45 different subunits.

Its subcellular location is the mitochondrion inner membrane. The protein resides in the mitochondrion intermembrane space. In terms of biological role, accessory subunit of the mitochondrial membrane respiratory chain NADH dehydrogenase (Complex I), that is believed not to be involved in catalysis. Complex I functions in the transfer of electrons from NADH to the respiratory chain. The immediate electron acceptor for the enzyme is believed to be ubiquinone. The chain is NADH dehydrogenase [ubiquinone] 1 beta subcomplex subunit 7 (NDUFB7) from Homo sapiens (Human).